Here is a 289-residue protein sequence, read N- to C-terminus: ATP synthase gamma chain (289 aa).

The protein belongs to the ATPase gamma chain family. In terms of assembly, F-type ATPases have 2 components, CF(1) - the catalytic core - and CF(0) - the membrane proton channel. CF(1) has five subunits: alpha(3), beta(3), gamma(1), delta(1), epsilon(1). CF(0) has three main subunits: a, b and c.

Its subcellular location is the cell membrane. In terms of biological role, produces ATP from ADP in the presence of a proton gradient across the membrane. The gamma chain is believed to be important in regulating ATPase activity and the flow of protons through the CF(0) complex. This chain is ATP synthase gamma chain, found in Mycoplasmoides gallisepticum (strain R(low / passage 15 / clone 2)) (Mycoplasma gallisepticum).